The chain runs to 490 residues: Cis-aconitate decarboxylase (490 aa).

Belongs to the PrpD family.

It is found in the mitochondrion. The enzyme catalyses cis-aconitate + H(+) = itaconate + CO2. Functionally, involved in the production of itaconic acid, a soluble unsaturated dicarboxylic acid mainly produced from sugars. In Aspergillus terreus, this protein is Cis-aconitate decarboxylase (cad1).